A 271-amino-acid chain; its full sequence is Tetraspanin-11 (271 aa).

The Cytoplasmic portion of the chain corresponds to 1–7 (MFRVSNF). Residues 8-28 (MVGLANTLVMLVGASAIGYSI) traverse the membrane as a helical segment. The Extracellular portion of the chain corresponds to 29 to 44 (YMFVHQGVTDCESAIR). A helical membrane pass occupies residues 45–65 (IPLLTTGLILFLVSLLGVIGS). Topologically, residues 66 to 76 (CFKENLAMVSY) are cytoplasmic. Residues 77–97 (LIILFGGIVALMIFSIFLFFV) form a helical membrane-spanning segment. At 98-236 (TNKGAGRVVS…LANIREKWRN (139 aa)) the chain is on the extracellular side. 2 N-linked (GlcNAc...) asparagine glycosylation sites follow: Asn-185 and Asn-195. The chain crosses the membrane as a helical span at residues 237–257 (LLVFNICLLILLITVYSCGCC). Residues 258-271 (ARRNNRTARKSDSV) are Cytoplasmic-facing.

This sequence belongs to the tetraspanin (TM4SF) family.

It is found in the membrane. Functionally, may be involved in the regulation of cell differentiation. The protein is Tetraspanin-11 (TET11) of Arabidopsis thaliana (Mouse-ear cress).